Consider the following 400-residue polypeptide: Enoyl-[acyl-carrier-protein] reductase [NADH] (400 aa).

Residues 48-53 (GSSSGY), 74-75 (FE), 111-112 (DA), and 139-140 (LA) contribute to the NAD(+) site. Y225 serves as a coordination point for substrate. Y235 functions as the Proton donor in the catalytic mechanism. Residues K244 and 273-275 (VVT) each bind NAD(+).

The protein belongs to the TER reductase family. As to quaternary structure, monomer.

It catalyses the reaction a 2,3-saturated acyl-[ACP] + NAD(+) = a (2E)-enoyl-[ACP] + NADH + H(+). Its pathway is lipid metabolism; fatty acid biosynthesis. Involved in the final reduction of the elongation cycle of fatty acid synthesis (FAS II). Catalyzes the reduction of a carbon-carbon double bond in an enoyl moiety that is covalently linked to an acyl carrier protein (ACP). This chain is Enoyl-[acyl-carrier-protein] reductase [NADH], found in Aliivibrio fischeri (strain MJ11) (Vibrio fischeri).